The primary structure comprises 418 residues: Flavin-dependent L-tryptophan oxidase VioA (418 aa).

Residue G13 coordinates Mg(2+). Residue S15 coordinates FAD. G16 contacts Mg(2+). 3 residues coordinate FAD: D38, R46, and R64. 2 residues coordinate substrate: R64 and H163. An FAD-binding site is contributed by L208. Position 240 (A240) interacts with Mg(2+). Substrate is bound at residue Y309. Position 398 (M398) interacts with FAD.

This sequence belongs to the flavin monoamine oxidase family. In terms of assembly, homodimer. FAD is required as a cofactor. Mg(2+) serves as cofactor.

The catalysed reaction is L-tryptophan + O2 = 2-iminio-3-(indol-3-yl)propanoate + H2O2. It carries out the reaction 7-chloro-L-tryptophan + O2 = 3-(7-chloroindol-3-yl)-2-iminopropanoate + H2O2. It functions in the pathway pigment biosynthesis; violacein biosynthesis. The enzyme generates the imine form of indole 3-pyruvate (IPA) from L-tryptophan (L-Trp), with concomitant two-electron reduction of O(2) to H(2)O(2). This chain is Flavin-dependent L-tryptophan oxidase VioA (vioA), found in Chromobacterium violaceum (strain ATCC 12472 / DSM 30191 / JCM 1249 / CCUG 213 / NBRC 12614 / NCIMB 9131 / NCTC 9757 / MK).